The primary structure comprises 443 residues: Monooxygenase asqM (443 aa).

This sequence belongs to the aromatic-ring hydroxylase family. Requires FAD as cofactor.

The protein operates within secondary metabolite biosynthesis. Its pathway is alkaloid biosynthesis. It participates in mycotoxin biosynthesis. Monooxygenase; part of the gene cluster that mediates the biosynthesis of the aspoquinolone mycotoxins. The role of asqM within the aspoquinolone pathway has still to be determined. The first step of the pathway is catalyzed by the nonribosomal peptide synthetase asqK that condenses anthranilic acid and O-methyl-L-tyrosine to produce 4'-methoxycyclopeptin. 4'-methoxycyclopeptin is then converted to 4'-methoxydehydrocyclopeptin by the ketoglutarate-dependent dioxygenase asqJ. AsqJ also converts its first product 4'-methoxydehydrocyclopeptin to 4'-methoxycyclopenin. The following conversion of 4'-methoxycyclopenin into 4'-methoxyviridicatin is catalyzed by the cyclopenase asqI. 4'-methoxyviridicatin is the precursor of quinolone natural products, and is further converted to quinolinone B. The prenyltransferase asqH1 then catalyzes the canonical Friedel-Crafts alkylation of quinolinone B with dimethylallyl cation to yield dimethylallyl quinolone, which is subjected to FAD-dependent dehydrogenation by the FAD-linked oxidoreductase asqF to yield conjugated aryl diene. The delta(3') double bond then serves as the site of the second alkylation with DMAPP catalyzed by the prenyltransferase asqH2 to yield a carbenium ion intermediate, which can be attacked by H(2)O to yield a styrenyl quinolone containing a C3'-hydroxyprenyl chain. The FAD-dependent monooxygenase asqG performs epoxidation of the terminal C7'-C8' olefin. Finally, after dehydratation of the epoxide at C3 by asqC, the quinolone epoxide rearrangement protein asqO catalyzes an enzymatic 3-exo-tet cyclization to yield the cyclopropyl-THF ring system in aspoquinolone. In Emericella nidulans (strain FGSC A4 / ATCC 38163 / CBS 112.46 / NRRL 194 / M139) (Aspergillus nidulans), this protein is Monooxygenase asqM.